The chain runs to 361 residues: Glyceraldehyde-3-phosphate dehydrogenase, glycosomal (361 aa).

NAD(+) is bound by residues 13-14 (RI), aspartate 39, glutamine 92, and serine 135. D-glyceraldehyde 3-phosphate-binding positions include 166 to 168 (SCT), threonine 198, 227 to 228 (TG), and arginine 250. Cysteine 167 acts as the Nucleophile in catalysis. Residue asparagine 336 coordinates NAD(+). Positions 359 to 361 (SKM) match the Microbody targeting signal motif.

This sequence belongs to the glyceraldehyde-3-phosphate dehydrogenase family. Homotetramer.

Its subcellular location is the glycosome. The enzyme catalyses D-glyceraldehyde 3-phosphate + phosphate + NAD(+) = (2R)-3-phospho-glyceroyl phosphate + NADH + H(+). Its pathway is carbohydrate degradation; glycolysis; pyruvate from D-glyceraldehyde 3-phosphate: step 1/5. The sequence is that of Glyceraldehyde-3-phosphate dehydrogenase, glycosomal (GAPG) from Leishmania mexicana.